A 201-amino-acid chain; its full sequence is Retinol-binding protein 4 (201 aa).

An N-terminal signal peptide occupies residues 1 to 18 (MKWVWALLLLAALGSGRA). 3 disulfides stabilise this stretch: cysteine 22–cysteine 178, cysteine 88–cysteine 192, and cysteine 138–cysteine 147. Glutamine 116 lines the substrate pocket. Arginine 139 carries the post-translational modification Omega-N-methylarginine.

The protein belongs to the calycin superfamily. Lipocalin family. Interacts with TTR. Interaction with TTR prevents its loss by filtration through the kidney glomeruli. Interacts with STRA6. Detected in blood plasma and in urine (at protein level).

Its subcellular location is the secreted. Its function is as follows. Retinol-binding protein that mediates retinol transport in blood plasma. Delivers retinol from the liver stores to the peripheral tissues. Transfers the bound all-trans retinol to STRA6, that then facilitates retinol transport across the cell membrane. The sequence is that of Retinol-binding protein 4 (RBP4) from Homo sapiens (Human).